The following is a 451-amino-acid chain: MQNLYIKTYGCQMNEYDSERMADTLAVSHGLRLVDDPVLADVLLLNTCSIREKAEDKVFTQLGFWRPFKERRPEVVIGVGGCVASQEGERLRRRAPYVDLVFGPQTLHRLPDLLDACLAERRPQVDIAFPMLEKFDHLPQRPGRDGATAFVTIQEGCDKFCTFCVVPHTRGREYSRSMPDILREVRALVEQGVREITLLGQNVNAYRGATGLVGEGGLADLLERLARIPGLLRLRYTTSHPANLDDELIAAHGSIGILAPHLHLPVQSGSDRILRRMHRKHTVGQYLDKVDRLRAARPGIQISSDFIVGFPGETDADFAATMELIDAVRFDQSFSFKYSQRPNTPALKLKDSVPEAVKEDRLAVLQGRINGLAQGYAQALVGTQQAVLITGPSRRDAQELTGKTACNRAVNLAGSMDWVGQMLDVEITAALPNSLRGRAALVAPTSQRLAV.

An MTTase N-terminal domain is found at 2-119 (QNLYIKTYGC…LPDLLDACLA (118 aa)). [4Fe-4S] cluster is bound by residues cysteine 11, cysteine 48, cysteine 82, cysteine 157, cysteine 161, and cysteine 164. The Radical SAM core domain maps to 143-377 (GRDGATAFVT…RINGLAQGYA (235 aa)). The TRAM domain occupies 378–441 (QALVGTQQAV…PNSLRGRAAL (64 aa)).

It belongs to the methylthiotransferase family. MiaB subfamily. Monomer. Requires [4Fe-4S] cluster as cofactor.

It is found in the cytoplasm. The catalysed reaction is N(6)-dimethylallyladenosine(37) in tRNA + (sulfur carrier)-SH + AH2 + 2 S-adenosyl-L-methionine = 2-methylsulfanyl-N(6)-dimethylallyladenosine(37) in tRNA + (sulfur carrier)-H + 5'-deoxyadenosine + L-methionine + A + S-adenosyl-L-homocysteine + 2 H(+). Catalyzes the methylthiolation of N6-(dimethylallyl)adenosine (i(6)A), leading to the formation of 2-methylthio-N6-(dimethylallyl)adenosine (ms(2)i(6)A) at position 37 in tRNAs that read codons beginning with uridine. The protein is tRNA-2-methylthio-N(6)-dimethylallyladenosine synthase of Acidithiobacillus ferrooxidans (strain ATCC 23270 / DSM 14882 / CIP 104768 / NCIMB 8455) (Ferrobacillus ferrooxidans (strain ATCC 23270)).